The following is a 352-amino-acid chain: Chorismate synthase (352 aa).

NADP(+) is bound at residue arginine 48. Residues 125–127 (RSS), 237–238 (NA), glycine 278, 293–297 (KPTSS), and arginine 319 contribute to the FMN site.

It belongs to the chorismate synthase family. In terms of assembly, homotetramer. Requires FMNH2 as cofactor.

The enzyme catalyses 5-O-(1-carboxyvinyl)-3-phosphoshikimate = chorismate + phosphate. It functions in the pathway metabolic intermediate biosynthesis; chorismate biosynthesis; chorismate from D-erythrose 4-phosphate and phosphoenolpyruvate: step 7/7. Catalyzes the anti-1,4-elimination of the C-3 phosphate and the C-6 proR hydrogen from 5-enolpyruvylshikimate-3-phosphate (EPSP) to yield chorismate, which is the branch point compound that serves as the starting substrate for the three terminal pathways of aromatic amino acid biosynthesis. This reaction introduces a second double bond into the aromatic ring system. This Francisella tularensis subsp. mediasiatica (strain FSC147) protein is Chorismate synthase.